Here is a 135-residue protein sequence, read N- to C-terminus: Small ribosomal subunit protein uS12 (135 aa).

3-methylthioaspartic acid is present on aspartate 89. A disordered region spans residues 101 to 135; it reads SLDTSGVADRKQSRSKYGAKQPKAGAAAPVKGKRR. Over residues 116-135 the composition is skewed to low complexity; that stretch reads KYGAKQPKAGAAAPVKGKRR.

It belongs to the universal ribosomal protein uS12 family. Part of the 30S ribosomal subunit. Contacts proteins S8 and S17. May interact with IF1 in the 30S initiation complex.

Its function is as follows. With S4 and S5 plays an important role in translational accuracy. Functionally, interacts with and stabilizes bases of the 16S rRNA that are involved in tRNA selection in the A site and with the mRNA backbone. Located at the interface of the 30S and 50S subunits, it traverses the body of the 30S subunit contacting proteins on the other side and probably holding the rRNA structure together. The combined cluster of proteins S8, S12 and S17 appears to hold together the shoulder and platform of the 30S subunit. This is Small ribosomal subunit protein uS12 from Chlorobium phaeobacteroides (strain DSM 266 / SMG 266 / 2430).